The chain runs to 242 residues: DNA repair protein RecO (242 aa).

This sequence belongs to the RecO family. In terms of assembly, monomer.

In terms of biological role, involved in DNA repair and RecF pathway recombination. In Salmonella schwarzengrund (strain CVM19633), this protein is DNA repair protein RecO.